Here is a 122-residue protein sequence, read N- to C-terminus: UPF0344 protein BPUM_1008 (122 aa).

4 consecutive transmembrane segments (helical) span residues 5–25 (LHIT…ALAG), 33–53 (IVHM…VELY), 60–80 (IPGF…VIGF), and 93–113 (SVTG…LLGL).

This sequence belongs to the UPF0344 family.

The protein resides in the cell membrane. This chain is UPF0344 protein BPUM_1008, found in Bacillus pumilus (strain SAFR-032).